A 365-amino-acid polypeptide reads, in one-letter code: Paraneoplastic antigen Ma2 homolog (365 aa).

Ala2 carries the N-acetylalanine modification. Residues 336–365 (EEEDAYFEQESREEPGEREGSGCWNNSRNN) form a disordered region. The segment covering 344–355 (QESREEPGEREG) has biased composition (basic and acidic residues).

Belongs to the PNMA family. As to expression, expressed in the cerebrum, cerebellum and testis.

It localises to the nucleus. Its subcellular location is the nucleolus. The sequence is that of Paraneoplastic antigen Ma2 homolog (Pnma2) from Mus musculus (Mouse).